The chain runs to 340 residues: Aurora kinase A- and ninein-interacting protein (340 aa).

An interaction with AURKA region spans residues 175–340 (QREAKRKGEG…DSEGNRVIRH (166 aa)). Over residues 178–190 (AKRKGEGLRESKT) the composition is skewed to basic and acidic residues. Positions 178–209 (AKRKGEGLRESKTDCPGMGSHIRPPGSKCHQP) are disordered. The interval 266 to 340 (RDSWSQLFTE…DSEGNRVIRH (75 aa)) is interaction with RBBP8/CtIP. S277 bears the Phosphoserine mark. The interval 293 to 317 (DVTNARNQGSGQFPDSPQAQGQDGP) is disordered. A compositionally biased stretch (polar residues) spans 296–313 (NARNQGSGQFPDSPQAQG).

This sequence belongs to the AUNIP family. Interacts (via C-terminus) with AURKA (via C-terminus). Interacts (via N-terminus) with NIN; this interaction blocks NIN phosphorylation by both AURKA and GSK3B. Identified in a complex with NIN and AURKA. Interacts with RBBP8/CtIP.

It localises to the nucleus. The protein resides in the chromosome. Its subcellular location is the cytoplasm. The protein localises to the cytoskeleton. It is found in the microtubule organizing center. It localises to the centrosome. The protein resides in the spindle pole. Its function is as follows. DNA-binding protein that accumulates at DNA double-strand breaks (DSBs) following DNA damage and promotes DNA resection and homologous recombination. Serves as a sensor of DNA damage: binds DNA with a strong preference for DNA substrates that mimic structures generated at stalled replication forks, and anchors RBBP8/CtIP to DSB sites to promote DNA end resection and ensuing homologous recombination repair. Inhibits non-homologous end joining (NHEJ). Required for the dynamic movement of AURKA at the centrosomes and spindle apparatus during the cell cycle. The protein is Aurora kinase A- and ninein-interacting protein of Mus musculus (Mouse).